The chain runs to 104 residues: Large ribosomal subunit protein bL21 (104 aa).

It belongs to the bacterial ribosomal protein bL21 family. As to quaternary structure, part of the 50S ribosomal subunit. Contacts protein L20.

Its function is as follows. This protein binds to 23S rRNA in the presence of protein L20. The protein is Large ribosomal subunit protein bL21 of Streptococcus uberis (strain ATCC BAA-854 / 0140J).